Here is a 284-residue protein sequence, read N- to C-terminus: Bifunctional protein FolD (284 aa).

Gly-166–Ser-168 provides a ligand contact to NADP(+).

Belongs to the tetrahydrofolate dehydrogenase/cyclohydrolase family. Homodimer.

It catalyses the reaction (6R)-5,10-methylene-5,6,7,8-tetrahydrofolate + NADP(+) = (6R)-5,10-methenyltetrahydrofolate + NADPH. It carries out the reaction (6R)-5,10-methenyltetrahydrofolate + H2O = (6R)-10-formyltetrahydrofolate + H(+). The protein operates within one-carbon metabolism; tetrahydrofolate interconversion. Its function is as follows. Catalyzes the oxidation of 5,10-methylenetetrahydrofolate to 5,10-methenyltetrahydrofolate and then the hydrolysis of 5,10-methenyltetrahydrofolate to 10-formyltetrahydrofolate. This is Bifunctional protein FolD from Legionella pneumophila (strain Corby).